Consider the following 968-residue polypeptide: Protein translocase subunit SecA 1 (968 aa).

ATP-binding positions include glutamine 86, 104-108, and aspartate 493; that span reads GEGKT. Basic and acidic residues-rich tracts occupy residues 858–868 and 883–898; these read EAEKTEDKAED and ESAK…ESVA. Residues 858–968 are disordered; it reads EAEKTEDKAE…KCHGAPKSRV (111 aa). The Zn(2+) site is built by cysteine 949, cysteine 951, cysteine 960, and histidine 961. Over residues 955 to 968 the composition is skewed to basic residues; it reads KKYKKCHGAPKSRV.

Belongs to the SecA family. In terms of assembly, monomer and homodimer. Part of the essential Sec protein translocation apparatus which comprises SecA, SecYEG and auxiliary proteins SecDF. Other proteins may also be involved. Requires Zn(2+) as cofactor.

It is found in the cell membrane. The protein resides in the cytoplasm. The enzyme catalyses ATP + H2O + cellular proteinSide 1 = ADP + phosphate + cellular proteinSide 2.. Its function is as follows. Part of the Sec protein translocase complex. Interacts with the SecYEG preprotein conducting channel. Has a central role in coupling the hydrolysis of ATP to the transfer of proteins into and across the cell membrane, serving as an ATP-driven molecular motor driving the stepwise translocation of polypeptide chains across the membrane. This Thermobifida fusca (strain YX) protein is Protein translocase subunit SecA 1.